Here is a 746-residue protein sequence, read N- to C-terminus: Quiannulatene synthase (746 aa).

Positions 1–336 are sesterterpenoid synthase; it reads MASEVIVISD…SRYPTKTELN (336 aa). Aspartate 95 is a binding site for Mg(2+). Residues 338–746 form a geranylfarnesyl diphosphate synthase region; sequence PEVIIVDGEL…VELMLRRLWV (409 aa). Isopentenyl diphosphate is bound by residues lysine 465, arginine 468, and histidine 497. Mg(2+) contacts are provided by aspartate 504 and aspartate 508. Arginine 513 is a binding site for dimethylallyl diphosphate. Residue arginine 514 coordinates isopentenyl diphosphate. Dimethylallyl diphosphate-binding residues include lysine 591, threonine 592, glutamine 628, asparagine 635, and lysine 645.

This sequence in the N-terminal section; belongs to the terpene synthase family. In the C-terminal section; belongs to the FPP/GGPP synthase family. Mg(2+) serves as cofactor.

The catalysed reaction is isopentenyl diphosphate + (2E,6E)-farnesyl diphosphate = (2E,6E,10E)-geranylgeranyl diphosphate + diphosphate. The enzyme catalyses (2E,6E,10E,14E)-geranylfarnesyl diphosphate = quiannulatene + diphosphate. The protein operates within secondary metabolite biosynthesis; terpenoid biosynthesis. Its function is as follows. Bifunctional sesterterpene synthase; part of the gene cluster that mediates the biosynthesis of the pentacyclic sesterterpene quiannulatic acid. The first step of the pathway is performed by the sesterterpene synthase (QS) that possesses both prenyl transferase and terpene cyclase activity, converting isopentenyl diphosphate and dimethylallyl diphosphate into geranylfarnesyl diphosphate (GFPP) and further converting GFPP into quiannulatene via an unprecedented cyclization mode which involves three rounds of hydride shifts and two successive C-C bond migrations to construct the 5-6-5-5-5 fused ring. The cytochrome P450 monooxygenase Qnn-P450 then oxidizes quiannulatene at C-19 in 3 successive reactions to afford quiannulatic acid. This Emericella variicolor (Aspergillus stellatus) protein is Quiannulatene synthase.